Reading from the N-terminus, the 233-residue chain is C-type lectin domain family 2 member D2 (233 aa).

Positions Met1–Gly34 are disordered. Over Met1–Cys76 the chain is Cytoplasmic. A helical; Signal-anchor for type II membrane protein membrane pass occupies residues Cys77 to Val97. Residues Lys98–Gln233 are Extracellular-facing. The region spanning Val119–Tyr228 is the C-type lectin domain. Asn132 is a glycosylation site (N-linked (GlcNAc...) asparagine).

It localises to the cell membrane. In terms of biological role, lectin-type cell surface receptor. The sequence is that of C-type lectin domain family 2 member D2 (Clec2d2) from Rattus norvegicus (Rat).